The following is a 105-amino-acid chain: Multidrug resistance protein EbrA (105 aa).

4 helical membrane passes run 2 to 22 (LVGY…AAML), 35 to 55 (ALVV…LNHI), 57 to 77 (LSLS…VIGV), and 84 to 104 (LNAK…LLNW).

It belongs to the drug/metabolite transporter (DMT) superfamily. Small multidrug resistance (SMR) (TC 2.A.7.1) family. EbrA/EbrB subfamily. In terms of assembly, the efflux pump is composed of EbrA and EbrB.

It is found in the cell membrane. Its function is as follows. Part of a multidrug efflux pump. Confers resistance to cationic lipophilic dyes such as ethidium bromide, acriflavine, pyronine Y and safranin O. The efflux is probably coupled to an influx of protons. This is Multidrug resistance protein EbrA (ebrA) from Bacillus atrophaeus.